A 218-amino-acid polypeptide reads, in one-letter code: Octanoyltransferase (218 aa).

A BPL/LPL catalytic domain is found at 31-207; the sequence is AQTPDELWLL…QLAAQLGYAE (177 aa). Substrate contacts are provided by residues 70–77, 137–139, and 150–152; these read RGGQVTYH, SLG, and GLA. The active-site Acyl-thioester intermediate is cysteine 168.

This sequence belongs to the LipB family.

It is found in the cytoplasm. The enzyme catalyses octanoyl-[ACP] + L-lysyl-[protein] = N(6)-octanoyl-L-lysyl-[protein] + holo-[ACP] + H(+). It functions in the pathway protein modification; protein lipoylation via endogenous pathway; protein N(6)-(lipoyl)lysine from octanoyl-[acyl-carrier-protein]: step 1/2. In terms of biological role, catalyzes the transfer of endogenously produced octanoic acid from octanoyl-acyl-carrier-protein onto the lipoyl domains of lipoate-dependent enzymes. Lipoyl-ACP can also act as a substrate although octanoyl-ACP is likely to be the physiological substrate. This chain is Octanoyltransferase, found in Azotobacter vinelandii (strain DJ / ATCC BAA-1303).